A 357-amino-acid polypeptide reads, in one-letter code: MGQRIPVTLGNIAPLSLRPFQPGRIALVCEGGGQRGIFTAGVLDEFMRAQFNPFDLYLGTSAGAQNLSAFICNQPGYARKVIMRYTTKREFFDPLRFVRGGNLIDLDWLVEATASQMPLQMDTAARLFDSGKSFYMCACRQDDYAPNYFLPTKQNWLDVIRASSAIPGFYRSGVSLEGINYLDGGISDAIPVKEAARQGAKTLVVIRTVPSQMYYTPQWFKRMERWLGDSSLQPLVNLVQHHETSYRDIQQFIEKPPGKLRIFEIYPPKPLHSIALGSRIPALREDYKLGRLCGRYFLATVGKLLTEKAPLTRHLVPVVTPESIVIPPAPVANDTLVAEVSDAPQANDPTFNNEDLA.

The PNPLA domain maps to 27–196 (LVCEGGGQRG…SDAIPVKEAA (170 aa)). A GXGXXG motif is present at residues 31–36 (GGGQRG). Positions 59–63 (GTSAG) match the GXSXG motif. The active-site Nucleophile is the S61. Catalysis depends on D183, which acts as the Proton acceptor. The DGA/G signature appears at 183–185 (DGG).

Probable lipid hydrolase. This is an uncharacterized protein from Escherichia coli (strain K12).